We begin with the raw amino-acid sequence, 155 residues long: Small ribosomal subunit protein uS7 (155 aa).

It belongs to the universal ribosomal protein uS7 family. As to quaternary structure, part of the 30S ribosomal subunit. Contacts proteins S9 and S11.

In terms of biological role, one of the primary rRNA binding proteins, it binds directly to 16S rRNA where it nucleates assembly of the head domain of the 30S subunit. Is located at the subunit interface close to the decoding center, probably blocks exit of the E-site tRNA. The protein is Small ribosomal subunit protein uS7 of Pelodictyon phaeoclathratiforme (strain DSM 5477 / BU-1).